The following is a 327-amino-acid chain: Olfactory receptor 51T1 (327 aa).

Residues 1 to 27 lie on the Extracellular side of the membrane; it reads MAIFNNTTSSSSNFLLTAFPGLECAHV. Asn-5 and Asn-6 each carry an N-linked (GlcNAc...) asparagine glycan. Residues 28–48 form a helical membrane-spanning segment; that stretch reads WISIPVCCLYTIALLGNSMIF. The Cytoplasmic portion of the chain corresponds to 49–56; that stretch reads LVIITKRR. Residues 57–77 form a helical membrane-spanning segment; that stretch reads LHKPMYYFLSMLAAVDLCLTI. Residues 78–101 lie on the Extracellular side of the membrane; the sequence is TTLPTVLGVLWFHAREISFKACFI. Residues 102-122 form a helical membrane-spanning segment; it reads QMFFVHAFSLLESSVLVAMAF. At 123-141 the chain is on the cytoplasmic side; sequence DRFVAICNPLNYATILTDR. The chain crosses the membrane as a helical span at residues 142–162; sequence MVLVIGLVICIRPAVFLLPLL. Residues 163-198 lie on the Extracellular side of the membrane; that stretch reads VAINTVSFHGGHELSHPFCYHPEVIKYTYSKPWISS. The helical transmembrane segment at 199-219 threads the bilayer; the sequence is FWGLFLQLYLNGTDVLFILFS. Over 220–239 the chain is Cytoplasmic; that stretch reads YVLILRTVLGIVARKKQQKA. The chain crosses the membrane as a helical span at residues 240-260; sequence LSTCVCHICAVTIFYVPLISL. The Extracellular segment spans residues 261 to 275; the sequence is SLAHRLFHSTPRVLC. The chain crosses the membrane as a helical span at residues 276-296; the sequence is STLANIYLLLPPVLNPIIYSL. At 297 to 327 the chain is on the cytoplasmic side; sequence KTKTIRQAMFQLLQSKGSWGFNVRGLRGRWD.

This sequence belongs to the G-protein coupled receptor 1 family.

The protein localises to the cell membrane. Odorant receptor. The chain is Olfactory receptor 51T1 (OR51T1) from Homo sapiens (Human).